We begin with the raw amino-acid sequence, 718 residues long: Adhesin-like cell surface protein MAD1 (718 aa).

The signal sequence occupies residues 1-19 (MKGAIQFLGALAAVQAVSA). 9 consecutive repeat copies span residues 217–243 (PCTE…TEPA), 244–265 (PCTE…TEPA), 266–282 (PCTE…TEPA), 283–309 (PCTE…TEPA), 310–336 (PCTE…TEPA), 337–358 (PCTE…TEPA), 359–382 (PCTE…TDEA), 383–402 (PCTD…TDEA), and 403–420 (PCTE…AVPT). Residues 452-472 (TSIPYETPSPSETETLPPSGT) are disordered. The CFEM domain maps to 462-575 (SETETLPPSG…VTLPPVTTGA (114 aa)). Intrachain disulfides connect Cys-494-Cys-526, Cys-504-Cys-512, and Cys-514-Cys-548. Asp-509 contributes to the heme binding site. Gly-693 carries the GPI-anchor amidated glycine lipid modification. The propeptide at 694 to 718 (AASSFKAFSTVMLAGVIGLTALIMA) is removed in mature form.

This sequence belongs to the RBT5 family. In terms of processing, the GPI-anchor is attached to the protein in the endoplasmic reticulum and serves to target the protein to the cell surface. There, the glucosamine-inositol phospholipid moiety is cleaved off and the GPI-modified mannoprotein is covalently attached via its lipidless GPI glycan remnant to the 1,6-beta-glucan of the outer cell wall layer.

The protein localises to the secreted. Its subcellular location is the cell wall. The protein resides in the cell membrane. In terms of biological role, cell surface adhesion protein that plays a key role in switching between the saprophytic lifestyle and the predacious lifestyle (nematode trapping). Likely functions to prevent energy-consuming trap formation in the absence of nematodes, and keeps the fungus in the saprophytic life style. May influence the induction signal of trap formation by limiting the porosity of the cell wall and thus affecting its permeability of nitrogen source. In Arthrobotrys oligospora (strain ATCC 24927 / CBS 115.81 / DSM 1491) (Nematode-trapping fungus), this protein is Adhesin-like cell surface protein MAD1.